Consider the following 1056-residue polypeptide: Isoleucine--tRNA ligase (1056 aa).

The 'HIGH' region signature appears at 56–66 (PFATGLPHYGH). The 'KMSKS' region signature appears at 603 to 607 (KMSKS). K606 is a binding site for ATP.

The protein belongs to the class-I aminoacyl-tRNA synthetase family. IleS type 2 subfamily. In terms of assembly, monomer. Zn(2+) serves as cofactor.

The protein resides in the cytoplasm. It catalyses the reaction tRNA(Ile) + L-isoleucine + ATP = L-isoleucyl-tRNA(Ile) + AMP + diphosphate. Functionally, catalyzes the attachment of isoleucine to tRNA(Ile). As IleRS can inadvertently accommodate and process structurally similar amino acids such as valine, to avoid such errors it has two additional distinct tRNA(Ile)-dependent editing activities. One activity is designated as 'pretransfer' editing and involves the hydrolysis of activated Val-AMP. The other activity is designated 'posttransfer' editing and involves deacylation of mischarged Val-tRNA(Ile). This Bdellovibrio bacteriovorus (strain ATCC 15356 / DSM 50701 / NCIMB 9529 / HD100) protein is Isoleucine--tRNA ligase.